The primary structure comprises 332 residues: UPF0194 membrane protein YbhG (332 aa).

A signal peptide spans 1–26 (MMKKPVVIELAVVVLAAVVAGGYWWY). Positions 108–209 (EEIAQAAAAV…LNLQDSTLIA (102 aa)) form a coiled coil.

It belongs to the UPF0194 family.

It is found in the periplasm. The protein is UPF0194 membrane protein YbhG (ybhG) of Shigella sonnei (strain Ss046).